A 369-amino-acid chain; its full sequence is Dual-specificity RNA methyltransferase RlmN (369 aa).

The Proton acceptor role is filled by glutamate 96. Residues 102–338 form the Radical SAM core domain; sequence DGERGTLCVS…VTTIRTTRGD (237 aa). An intrachain disulfide couples cysteine 109 to cysteine 344. [4Fe-4S] cluster is bound by residues cysteine 116, cysteine 120, and cysteine 123. Residues 169–170, serine 201, 223–225, and asparagine 301 contribute to the S-adenosyl-L-methionine site; these read GE and SLH. The S-methylcysteine intermediate role is filled by cysteine 344.

This sequence belongs to the radical SAM superfamily. RlmN family. It depends on [4Fe-4S] cluster as a cofactor.

It localises to the cytoplasm. The enzyme catalyses adenosine(2503) in 23S rRNA + 2 reduced [2Fe-2S]-[ferredoxin] + 2 S-adenosyl-L-methionine = 2-methyladenosine(2503) in 23S rRNA + 5'-deoxyadenosine + L-methionine + 2 oxidized [2Fe-2S]-[ferredoxin] + S-adenosyl-L-homocysteine. It catalyses the reaction adenosine(37) in tRNA + 2 reduced [2Fe-2S]-[ferredoxin] + 2 S-adenosyl-L-methionine = 2-methyladenosine(37) in tRNA + 5'-deoxyadenosine + L-methionine + 2 oxidized [2Fe-2S]-[ferredoxin] + S-adenosyl-L-homocysteine. Functionally, specifically methylates position 2 of adenine 2503 in 23S rRNA and position 2 of adenine 37 in tRNAs. m2A2503 modification seems to play a crucial role in the proofreading step occurring at the peptidyl transferase center and thus would serve to optimize ribosomal fidelity. This Marinobacter nauticus (strain ATCC 700491 / DSM 11845 / VT8) (Marinobacter aquaeolei) protein is Dual-specificity RNA methyltransferase RlmN.